Here is a 511-residue protein sequence, read N- to C-terminus: 2-isopropylmalate synthase (511 aa).

The Pyruvate carboxyltransferase domain occupies 6–269 (IIIFDTTLRD…YTDIKCENIF (264 aa)). Mn(2+) is bound by residues Asp-15, His-203, His-205, and Asn-239. The segment at 394 to 511 (VIEKLSVISG…SLKVEERKMA (118 aa)) is regulatory domain.

This sequence belongs to the alpha-IPM synthase/homocitrate synthase family. LeuA type 1 subfamily. In terms of assembly, homodimer. Requires Mn(2+) as cofactor.

The protein localises to the cytoplasm. The catalysed reaction is 3-methyl-2-oxobutanoate + acetyl-CoA + H2O = (2S)-2-isopropylmalate + CoA + H(+). Its pathway is amino-acid biosynthesis; L-leucine biosynthesis; L-leucine from 3-methyl-2-oxobutanoate: step 1/4. Functionally, catalyzes the condensation of the acetyl group of acetyl-CoA with 3-methyl-2-oxobutanoate (2-ketoisovalerate) to form 3-carboxy-3-hydroxy-4-methylpentanoate (2-isopropylmalate). The sequence is that of 2-isopropylmalate synthase from Campylobacter jejuni (strain RM1221).